The sequence spans 1940 residues: Myosin-3 (1940 aa).

In terms of domain architecture, Myosin N-terminal SH3-like spans 33 to 82; the sequence is DAKTYCFVVDSKEEYVKGKIKSSQDGKVTVETEDSRTLVVKPEDVYAMNP. In terms of domain architecture, Myosin motor spans 86–779; it reads DKIEDMAMLT…LLGTLEEMRD (694 aa). K130 bears the N6,N6,N6-trimethyllysine mark. 179 to 186 is an ATP binding site; the sequence is GESGAGKT. 2 actin-binding regions span residues 656-678 and 758-772; these read LNKL…IPNE and KFGH…GLLG. The IQ domain occupies 782-811; it reads LAKLITRTQAVCRGFLMRVEFQKMMQRRES. Residues 841 to 1928 are a coiled coil; it reads LKSAETEKEM…NKLRAKTRDF (1088 aa). The interval 1260 to 1289 is disordered; that stretch reads ARGKNEEMQRSLSELTTQKSRLQTEAGELS. Positions 1269–1282 are enriched in polar residues; the sequence is RSLSELTTQKSRLQ.

Belongs to the TRAFAC class myosin-kinesin ATPase superfamily. Myosin family. In terms of assembly, muscle myosin is a hexameric protein that consists of 2 heavy chain subunits (MHC), 2 alkali light chain subunits (MLC) and 2 regulatory light chain subunits (MLC-2).

The protein resides in the cytoplasm. Its subcellular location is the myofibril. Its function is as follows. Muscle contraction. This Mus musculus (Mouse) protein is Myosin-3 (Myh3).